The sequence spans 286 residues: NAD kinase (286 aa).

The active-site Proton acceptor is D74. Residues 74 to 75 (DG), 148 to 149 (ND), D178, A186, 189 to 194 (TAYNLS), and Q244 contribute to the NAD(+) site.

It belongs to the NAD kinase family. A divalent metal cation serves as cofactor.

It localises to the cytoplasm. The catalysed reaction is NAD(+) + ATP = ADP + NADP(+) + H(+). In terms of biological role, involved in the regulation of the intracellular balance of NAD and NADP, and is a key enzyme in the biosynthesis of NADP. Catalyzes specifically the phosphorylation on 2'-hydroxyl of the adenosine moiety of NAD to yield NADP. The protein is NAD kinase of Campylobacter jejuni subsp. jejuni serotype O:2 (strain ATCC 700819 / NCTC 11168).